Reading from the N-terminus, the 500-residue chain is Cytochrome P450 2D15 (500 aa).

Cys-446 is a binding site for heme.

Belongs to the cytochrome P450 family. Requires heme as cofactor. Liver. Also detected in several other tissues.

It is found in the endoplasmic reticulum membrane. It localises to the microsome membrane. It catalyses the reaction an organic molecule + reduced [NADPH--hemoprotein reductase] + O2 = an alcohol + oxidized [NADPH--hemoprotein reductase] + H2O + H(+). Functionally, high activity for the hydroxylation of bunitrolol and imipramine; low activity on debrisoquine. This is Cytochrome P450 2D15 (CYP2D15) from Canis lupus familiaris (Dog).